Reading from the N-terminus, the 350-residue chain is Cyclin-O (350 aa).

Residues 1 to 89 (MVTPCPTSPS…GSPLPGPAQP (89 aa)) form a disordered region. Over residues 28–42 (PVKKSRRPRLRRKQP) the composition is skewed to basic residues. Ser-81 carries the phosphoserine modification.

Belongs to the cyclin family. As to expression, present in respiratory cells (at protein level).

Its subcellular location is the cytoplasm. The protein resides in the nucleus. It is found in the nucleolus. Its function is as follows. Specifically required for generation of multiciliated cells, possibly by promoting a cell cycle state compatible with centriole amplification and maturation. Acts downstream of MCIDAS to promote mother centriole amplification and maturation in preparation for apical docking. The protein is Cyclin-O of Homo sapiens (Human).